We begin with the raw amino-acid sequence, 679 residues long: MGIRGLMSFVEDHSNEFFTDLKLRDTKIVIDGYALFHRLCFSSNLDLRYGGDYDSFADVVQKFFESLFACNICPYVVLDGGCDISDKKLTTLKDRAREKIQMAHSLSVGGSGYVCPLLIREVFIQVLIKLRVCFVQCFSEADRDIMTLANHWNCPVLSSDSDFCIFDLKTGFCPLNSFQWRNMDTIKGTQNYIPAKCFSLDAFCHHFSNMNKALLPLFAVLCGNDHVNLPIMETFLSKARLPLGATSSKGRRHHRILGLLNWLSHFANPTEALDNVLKYLPKKDRENVKELLCCSMEEYQQSQVKLQDFFQCGTYVCPDALNLGLPEWVLVALAKGQLSPFISDALVLRRTILPTQVENMQQPNAHRISQPIRQIIYGLLLNASPHLDKTSWNALPPQPLAFSEVERINKNIRTSIIDAVELAKDHSDLSRLTELSLRRRQMLLLETLKVKQTILEPIPTSLKLPIAVSCYWLQHTETKAKLHHLQSLLLTMLVGPLIAIINSPGKEELQEDGAKMLYAEFQRVKAQTRLGTRLDLDTAHIFCQWQSCLQMGMYLNQLLPTPLPEPDLTRLYSGSLVHGLCQQLLASTSVESLLSICPEAKQLYEYLFNATRSYAPAEIFLPKGRSNSKKKRQKKQNTSCSKNRGRTTAHTKCWYEGNNRFGLLMVENLEEHSEASNIE.

Positions 351–400 (TILPTQVENMQQPNAHRISQPIRQIIYGLLLNASPHLDKTSWNALPPQPL) are interaction with SHLD2. Residues 625-645 (RSNSKKKRQKKQNTSCSKNRG) form a disordered region. Residues 626 to 635 (SNSKKKRQKK) are compositionally biased toward basic residues.

The protein belongs to the asteroid family. In terms of assembly, interacts with SHLD1, SHLD2, SHLD3, RIF1 and MAD2L2/REV7.

Functionally, structure-specific DNA endonuclease that specifically cleaves single-stranded DNA and 3' overhang DNA. Contributes to the control of DNA double-strand break repair choice by antagonizing BRCA1-dependent homologous recombination (HR) and promoting non-homologous end-joining (NHEJ). Recruited to the single-stranded DNA ends by SHLD2 and cleaves the 3' exposed DNA ends, therefore inhibiting DNA end resection (necessary for HR) and promoting DNA end protection (necessary for NHEJ). This is Single-strand DNA endonuclease ASTE1 (ASTE1) from Pongo abelii (Sumatran orangutan).